Consider the following 429-residue polypeptide: MKTELSEKLFAKAQTLFPGGVNSPVRAFRGVGGTPRFIARGKGSHLFDVDGNDYVDYVLSWGPMIVGHAHPEVMREVQDAMKEGASFGAPSPREITLAELVRERMPWIEKMRFCSSGTEATTAAIRVARGFTSRDDILKFEGCYHGAGDPLLVKAGSGVETLGLPDSPGVPADLAKHTLTLPYNDLAAVERLFAERGGSIACVIIEPVVGNMGVLVPKDGYLQGLLALCRKHGALFIVDEVMTGFRVSSGGACGLFGVRPDLVTFGKVIGGGLPVGAFGGRADVMDRVAPAGPIYQAGTLSGNPMAMAAGHATLRLMTGAAYEKLERLSAKLADGLRERAAAAKVPVQVNRVGSMLTVFFAEQPVFDAASARAASTKRFGAFFHRMLEGGAYLPPSQFEAAFLSTAHSEGDVEQTLHASEAAFAEAAKV.

Lys267 bears the N6-(pyridoxal phosphate)lysine mark.

The protein belongs to the class-III pyridoxal-phosphate-dependent aminotransferase family. HemL subfamily. In terms of assembly, homodimer. Pyridoxal 5'-phosphate is required as a cofactor.

Its subcellular location is the cytoplasm. The enzyme catalyses (S)-4-amino-5-oxopentanoate = 5-aminolevulinate. It participates in porphyrin-containing compound metabolism; protoporphyrin-IX biosynthesis; 5-aminolevulinate from L-glutamyl-tRNA(Glu): step 2/2. The chain is Glutamate-1-semialdehyde 2,1-aminomutase from Anaeromyxobacter sp. (strain Fw109-5).